The following is a 199-amino-acid chain: NADH-quinone oxidoreductase subunit C (199 aa).

Belongs to the complex I 30 kDa subunit family. As to quaternary structure, NDH-1 is composed of 14 different subunits. Subunits NuoB, C, D, E, F, and G constitute the peripheral sector of the complex.

The protein localises to the cell inner membrane. The enzyme catalyses a quinone + NADH + 5 H(+)(in) = a quinol + NAD(+) + 4 H(+)(out). Its function is as follows. NDH-1 shuttles electrons from NADH, via FMN and iron-sulfur (Fe-S) centers, to quinones in the respiratory chain. The immediate electron acceptor for the enzyme in this species is believed to be ubiquinone. Couples the redox reaction to proton translocation (for every two electrons transferred, four hydrogen ions are translocated across the cytoplasmic membrane), and thus conserves the redox energy in a proton gradient. The polypeptide is NADH-quinone oxidoreductase subunit C (Cupriavidus pinatubonensis (strain JMP 134 / LMG 1197) (Cupriavidus necator (strain JMP 134))).